Consider the following 107-residue polypeptide: uncharacterized protein (107 aa).

Positions 80-98 (SIDNLKPTSHQNGTTNDTA) are enriched in polar residues. Positions 80 to 107 (SIDNLKPTSHQNGTTNDTATMDHLEKNE) are disordered.

This is an uncharacterized protein from Human spumaretrovirus (SFVcpz(hu)).